We begin with the raw amino-acid sequence, 3890 residues long: Extracellular matrix-binding protein EbhB (3890 aa).

Positions 1 to 39 are cleaved as a signal peptide; it reads MNYRDKIQKFSIRKYTVGTFSTVIATLVFLGFNTSQAHA. The segment covering 41–59 has biased composition (polar residues); that stretch reads ETNQPASVVKQKQQSNNEQ. Disordered stretches follow at residues 41 to 152, 249 to 277, 1347 to 1372, and 2418 to 2438; these read ETNQ…GNDN, MPQR…PRSV, NEKA…NATT, and TITP…TLTA. A compositionally biased stretch (low complexity) spans 65-78; it reads SQVQNSQNSQNSQS. The segment covering 79 to 117 has biased composition (polar residues); it reads LSATHENEQPNNSQANLVNQKVAQSSTTNDEQPASQNVN. The segment covering 130-140 has biased composition (basic and acidic residues); it reads PDKEESKHKQN. Polar residues-rich tracts occupy residues 141 to 151, 250 to 266, 1360 to 1372, and 2427 to 2438; these read ESQSANKNGND, PQRQ…QTRS, YRTT…NATT, and HSVSSNPSTLTA. FIVAR domains lie at 2524-2580, 2610-2666, 2687-2750, 2780-2836, 2864-2919, 2947-3002, 3030-3085, 3154-3212, 3280-3339, 3407-3465, 3533-3591, 3659-3717, and 3785-3843; these read AKNH…VSDA, SKNN…ISDE, DTHA…VQSA, AKTK…IAAE, AKTQ…IRQN, AKNQ…INTN, AKTQ…INDK, AMTK…VNQK, AMTG…VNNA, AMGN…VNRA, AMGN…VTEA, AMNT…ITQK, and AMAN…VEAA.

The chain is Extracellular matrix-binding protein EbhB (ebhB) from Staphylococcus aureus (strain N315).